Reading from the N-terminus, the 269-residue chain is Phosphate import ATP-binding protein PstB (269 aa).

Residues 22–264 (IKVKNVDFFY…PANKKTEDYI (243 aa)) form the ABC transporter domain. 55–62 (GSSGSGKS) serves as a coordination point for ATP.

It belongs to the ABC transporter superfamily. Phosphate importer (TC 3.A.1.7) family. The complex is composed of two ATP-binding proteins (PstB), two transmembrane proteins (PstC and PstA) and a solute-binding protein (PstS).

It localises to the cell membrane. It catalyses the reaction phosphate(out) + ATP + H2O = ADP + 2 phosphate(in) + H(+). In terms of biological role, part of the ABC transporter complex PstSACB involved in phosphate import. Responsible for energy coupling to the transport system. This chain is Phosphate import ATP-binding protein PstB, found in Spiroplasma kunkelii.